We begin with the raw amino-acid sequence, 389 residues long: 8-amino-7-oxononanoate synthase (389 aa).

Arginine 19 lines the substrate pocket. 106–107 (GY) is a pyridoxal 5'-phosphate binding site. Residue histidine 131 coordinates substrate. Pyridoxal 5'-phosphate is bound by residues serine 178, 203-206 (DDAH), and 234-237 (TLSK). Lysine 237 carries the post-translational modification N6-(pyridoxal phosphate)lysine. Threonine 351 is a substrate binding site.

This sequence belongs to the class-II pyridoxal-phosphate-dependent aminotransferase family. BioF subfamily. As to quaternary structure, homodimer. The cofactor is pyridoxal 5'-phosphate.

The enzyme catalyses 6-carboxyhexanoyl-[ACP] + L-alanine + H(+) = (8S)-8-amino-7-oxononanoate + holo-[ACP] + CO2. It participates in cofactor biosynthesis; biotin biosynthesis. Functionally, catalyzes the decarboxylative condensation of pimeloyl-[acyl-carrier protein] and L-alanine to produce 8-amino-7-oxononanoate (AON), [acyl-carrier protein], and carbon dioxide. Can also use pimeloyl-CoA instead of pimeloyl-ACP as substrate. This chain is 8-amino-7-oxononanoate synthase (bioF), found in Lysinibacillus sphaericus (Bacillus sphaericus).